The primary structure comprises 490 residues: UDP-glucosyl transferase 73M2 (490 aa).

The Proton acceptor role is filled by His-20. The Charge relay role is filled by Asp-124. 8 residues coordinate UDP: Ser-297, Trp-353, Ala-354, His-371, Asn-375, Ser-376, Glu-379, and Tyr-393.

The protein belongs to the UDP-glycosyltransferase family. As to expression, mainly expressed in flowers, flower buds and young leaves, and, to a lesser extent, in old leaves, stems and roots.

It functions in the pathway secondary metabolite biosynthesis; terpenoid biosynthesis. Its function is as follows. Component of the oleanane-type triterpene saponins (e.g. saponarioside A and saponarioside B) biosynthetic pathway, leading to the production of natural products with detergent properties used as traditional sources of soap. A glycosyltransferase that mediates the conversion of QA-triFRX to QA-triFRXX via the elongation of the C-28 sugar chain with a D-xylose. The polypeptide is UDP-glucosyl transferase 73M2 (Saponaria officinalis (Common soapwort)).